A 562-amino-acid chain; its full sequence is Glucan 1,3-beta-glucosidase 2 (562 aa).

The signal sequence occupies residues 1-22 (MPLKSFFFSAFLVLCLSKFTQG). Asparagine 50, asparagine 77, asparagine 86, asparagine 90, asparagine 106, asparagine 157, and asparagine 220 each carry an N-linked (GlcNAc...) asparagine glycan. Glutamate 254 (proton donor) is an active-site residue. N-linked (GlcNAc...) asparagine glycosylation is found at asparagine 281, asparagine 285, asparagine 310, asparagine 317, and asparagine 322. Histidine 334 acts as the Nucleophile in catalysis. Residues asparagine 401, asparagine 480, and asparagine 539 are each glycosylated (N-linked (GlcNAc...) asparagine).

Belongs to the glycosyl hydrolase 5 (cellulase A) family.

The protein resides in the cell membrane. It carries out the reaction Successive hydrolysis of beta-D-glucose units from the non-reducing ends of (1-&gt;3)-beta-D-glucans, releasing alpha-glucose.. This is Glucan 1,3-beta-glucosidase 2 (EXG2) from Saccharomyces cerevisiae (strain ATCC 204508 / S288c) (Baker's yeast).